Reading from the N-terminus, the 236-residue chain is tRNA (guanine-N(1)-)-methyltransferase (236 aa).

Residues Gly112 and 132–137 contribute to the S-adenosyl-L-methionine site; that span reads VGDFIL.

The protein belongs to the RNA methyltransferase TrmD family. As to quaternary structure, homodimer.

The protein localises to the cytoplasm. The catalysed reaction is guanosine(37) in tRNA + S-adenosyl-L-methionine = N(1)-methylguanosine(37) in tRNA + S-adenosyl-L-homocysteine + H(+). Its function is as follows. Specifically methylates guanosine-37 in various tRNAs. This Campylobacter curvus (strain 525.92) protein is tRNA (guanine-N(1)-)-methyltransferase.